The primary structure comprises 340 residues: Outer membrane protein U (340 aa).

Residues M1 to A21 form the signal peptide.

The protein belongs to the Gram-negative porin family. In terms of assembly, homotrimer.

The protein resides in the cell outer membrane. Forms pores that allow passive diffusion of small molecules across the outer membrane. This is Outer membrane protein U (ompU) from Vibrio vulnificus (strain CMCP6).